Reading from the N-terminus, the 719-residue chain is NF-kappa-B inhibitor zeta (719 aa).

Residues 46 to 81 (GACDGGCSASGPSAPGSPGSDSSDFSSASSVSSCGA) show a composition bias toward low complexity. The segment at 46–97 (GACDGGCSASGPSAPGSPGSDSSDFSSASSVSSCGAVESRPRGGARAERLQV) is disordered. The segment covering 84–97 (SRPRGGARAERLQV) has biased composition (basic and acidic residues). The 23-residue stretch at 108–130 (RGPFQGVRVKNSVKELLLHIRSH) folds into the OCA domain. A Nuclear localization signal motif is present at residues 164–179 (KRKGSDSLSDGPACKR). 2 disordered regions span residues 188 to 210 (LTPP…ESKQ) and 289 to 343 (YSPQ…FAPL). Residues 201 to 210 (EDVHHNESKQ) are compositionally biased toward basic and acidic residues. Positions 322–394 (SYEPHLFGRE…LARPDASSTP (73 aa)) are required for transcriptional activity. Positions 405 to 719 (GGNPMSTTQL…KSIQQRAPPY (315 aa)) are interaction with NFKB1/p50. 7 ANK repeats span residues 444 to 473 (DGDT…ALHM), 480 to 509 (NGQS…QVNT), 513 to 542 (WGRT…GSNQ), 552 to 581 (DGLT…HSPE), 583 to 608 (QELL…AVEA), 613 to 642 (SGRT…CLSF), and 649 to 682 (NGNT…DPST).

Interacts with NFKB1/p50. Interacts with RELA. Interacts with AKIRIN2.

The protein localises to the nucleus. Functionally, involved in regulation of NF-kappa-B transcription factor complexes. Inhibits NF-kappa-B activity without affecting its nuclear translocation upon stimulation. Inhibits DNA-binding of RELA and NFKB1/p50, and of the NF-kappa-B p65-p50 heterodimer and the NF-kappa-B p50-p50 homodimer. Also seems to activate NF-kappa-B-mediated transcription. In vitro, upon association with NFKB1/p50 has transcriptional activation activity and, together with NFKB1/p50 and RELA, is recruited to LCN2 promoters. Promotes transcription of LCN2 and DEFB4. Is recruited to IL-6 promoters and activates IL-6 but decreases TNF-alpha production in response to LPS. Seems to be involved in the induction of inflammatory genes activated through TLR/IL-1 receptor signaling. Involved in the induction of T helper 17 cells (Th17) differentiation upon recognition of antigen by T cell antigen receptor (TCR). The polypeptide is NF-kappa-B inhibitor zeta (NFKBIZ) (Bos taurus (Bovine)).